Consider the following 930-residue polypeptide: Protocadherin gamma-A4 (930 aa).

The first 27 residues, 1-27 (MAAPYKSDRRGLIWICIFLGSLCDIRA), serve as a signal peptide directing secretion. 6 Cadherin domains span residues 28-132 (EQIR…APSF), 133-241 (GAQQ…APVF), 242-346 (TQPE…APEV), 347-451 (TVTS…PPTF), 452-561 (THAS…TPEI), and 569-682 (DGST…APID). Residues 28 to 691 (EQIRYSVPEE…DQEDSDITLY (664 aa)) are Extracellular-facing. N-linked (GlcNAc...) asparagine glycans are attached at residues Asn418 and Asn544. A helical membrane pass occupies residues 692–712 (LVVAVAAVSCVFLAFVIVLLI). Topologically, residues 713-930 (HRLRRWHSTR…KKKSGKKEKK (218 aa)) are cytoplasmic. Disordered regions lie at residues 803-839 (SSLQ…WPNN) and 900-930 (ATLT…KEKK). The segment covering 920 to 930 (NKKKSGKKEKK) has biased composition (basic residues).

The protein localises to the cell membrane. Its function is as follows. Potential calcium-dependent cell-adhesion protein. May be involved in the establishment and maintenance of specific neuronal connections in the brain. The chain is Protocadherin gamma-A4 from Mus musculus (Mouse).